A 501-amino-acid polypeptide reads, in one-letter code: Aldehyde dehydrogenase, cytosolic 1 (501 aa).

246-251 (GSTEVG) provides a ligand contact to NAD(+). Residue Glu269 is the Proton acceptor of the active site. The active-site Nucleophile is Cys303.

It belongs to the aldehyde dehydrogenase family. In terms of assembly, homotetramer. Eye specific, with very high expression in the lens.

The protein localises to the cytoplasm. It catalyses the reaction an aldehyde + NAD(+) + H2O = a carboxylate + NADH + 2 H(+). It participates in alcohol metabolism; ethanol degradation; acetate from ethanol: step 2/2. In terms of biological role, major component of the eye of elephant shrews, which in contrast to other mammals, possesses both a lens- and a non-lens class-1 aldehyde dehydrogenase 1. This eye-specific form is a structural protein of the lens and, in other part of the eye, serves as the major form of ALDH1. Can convert/oxidize retinaldehyde to retinoic acid. The chain is Aldehyde dehydrogenase, cytosolic 1 (ALDH1) from Elephantulus edwardii (Cape long-eared elephant shrew).